Consider the following 188-residue polypeptide: Pyridoxal 5'-phosphate synthase subunit PdxT (188 aa).

46–48 (GES) is a binding site for L-glutamine. The active-site Nucleophile is Cys78. Residues Arg105 and 134–135 (IR) each bind L-glutamine. Residues His170 and Glu172 each act as charge relay system in the active site.

Belongs to the glutaminase PdxT/SNO family. As to quaternary structure, in the presence of PdxS, forms a dodecamer of heterodimers. Only shows activity in the heterodimer.

It carries out the reaction aldehydo-D-ribose 5-phosphate + D-glyceraldehyde 3-phosphate + L-glutamine = pyridoxal 5'-phosphate + L-glutamate + phosphate + 3 H2O + H(+). The catalysed reaction is L-glutamine + H2O = L-glutamate + NH4(+). Its pathway is cofactor biosynthesis; pyridoxal 5'-phosphate biosynthesis. Its function is as follows. Catalyzes the hydrolysis of glutamine to glutamate and ammonia as part of the biosynthesis of pyridoxal 5'-phosphate. The resulting ammonia molecule is channeled to the active site of PdxS. The polypeptide is Pyridoxal 5'-phosphate synthase subunit PdxT (Thermotoga sp. (strain RQ2)).